The following is a 180-amino-acid chain: Putative adenylate kinase (180 aa).

ATP contacts are provided by glycine 10, glycine 12, lysine 13, threonine 14, and threonine 15. Positions 30-50 (SVKELALSRGIGERVSDEIEI) are NMP. The interval 99 to 109 (ARGYSKKKLAE) is LID. ATP-binding residues include arginine 100 and lysine 138.

It belongs to the adenylate kinase family. AK6 subfamily. In terms of assembly, interacts with uS11. Not a structural component of 40S pre-ribosomes, but transiently interacts with them by binding to uS11.

The enzyme catalyses AMP + ATP = 2 ADP. The catalysed reaction is ATP + H2O = ADP + phosphate + H(+). Its function is as follows. Broad-specificity nucleoside monophosphate (NMP) kinase that catalyzes the reversible transfer of the terminal phosphate group between nucleoside triphosphates and monophosphates. Also has ATPase activity. Involved in the late maturation steps of the 30S ribosomal particles, specifically 16S rRNA maturation. While NMP activity is not required for ribosome maturation, ATPase activity is. Associates transiently with small ribosomal subunit protein uS11. ATP hydrolysis breaks the interaction with uS11. May temporarily remove uS11 from the ribosome to enable a conformational change of the ribosomal RNA that is needed for the final maturation step of the small ribosomal subunit. This is Putative adenylate kinase from Thermococcus onnurineus (strain NA1).